The sequence spans 106 residues: Nucleoid-associated protein Exig_0019 (106 aa).

Residues 1 to 16 (MRGMGNMNNMMKQMQK) show a composition bias toward low complexity. Positions 1–23 (MRGMGNMNNMMKQMQKMQKDMAK) are disordered.

The protein belongs to the YbaB/EbfC family. As to quaternary structure, homodimer.

The protein resides in the cytoplasm. Its subcellular location is the nucleoid. Binds to DNA and alters its conformation. May be involved in regulation of gene expression, nucleoid organization and DNA protection. In Exiguobacterium sibiricum (strain DSM 17290 / CCUG 55495 / CIP 109462 / JCM 13490 / 255-15), this protein is Nucleoid-associated protein Exig_0019.